Reading from the N-terminus, the 161-residue chain is MSIVTKSIVNADAEARYLSPGELDRIKSFVTSGERRVRIAETMTGARERIIKEAGNQLFQKRPDVVSPGGNAYGEEMTATCLRDLDYYLRLITYGIVAGDVTPIEEIGVVGVREMYKSLGTPIEAVAEGVRAMKSVATSLLSGEDAAEAGAYFDYLIGAMS.

An N4-methylasparagine modification is found at Asn71. Cys81 is a binding site for (2R,3E)-phycocyanobilin.

Belongs to the phycobiliprotein family. In terms of assembly, component of the phycobilisome. Heterodimer of an alpha and a beta chain. Contains one covalently linked phycocyanobilin chromophore.

The protein localises to the cellular thylakoid membrane. Functionally, light-harvesting photosynthetic bile pigment-protein from the phycobiliprotein complex. Allophycocyanin has a maximum absorption at approximately 650 nanometers. The sequence is that of Allophycocyanin alpha chain (apcA) from Arthrospira platensis (Spirulina platensis).